The sequence spans 328 residues: GMP reductase (328 aa).

C176 serves as the catalytic Thioimidate intermediate. NADP(+) is bound at residue 205 to 228 (IIADGGIRTHGDIAKSIRFGASMV).

It belongs to the IMPDH/GMPR family. GuaC type 2 subfamily.

The enzyme catalyses IMP + NH4(+) + NADP(+) = GMP + NADPH + 2 H(+). Catalyzes the irreversible NADPH-dependent deamination of GMP to IMP. It functions in the conversion of nucleobase, nucleoside and nucleotide derivatives of G to A nucleotides, and in maintaining the intracellular balance of A and G nucleotides. This chain is GMP reductase, found in Streptococcus pneumoniae (strain Hungary19A-6).